Here is a 295-residue protein sequence, read N- to C-terminus: Indole-3-glycerol phosphate synthase (295 aa).

This sequence belongs to the TrpC family.

It carries out the reaction 1-(2-carboxyphenylamino)-1-deoxy-D-ribulose 5-phosphate + H(+) = (1S,2R)-1-C-(indol-3-yl)glycerol 3-phosphate + CO2 + H2O. Its pathway is amino-acid biosynthesis; L-tryptophan biosynthesis; L-tryptophan from chorismate: step 4/5. This chain is Indole-3-glycerol phosphate synthase, found in Synechococcus sp. (strain ATCC 27144 / PCC 6301 / SAUG 1402/1) (Anacystis nidulans).